Here is a 196-residue protein sequence, read N- to C-terminus: Imidazoleglycerol-phosphate dehydratase (196 aa).

It belongs to the imidazoleglycerol-phosphate dehydratase family.

It is found in the cytoplasm. It carries out the reaction D-erythro-1-(imidazol-4-yl)glycerol 3-phosphate = 3-(imidazol-4-yl)-2-oxopropyl phosphate + H2O. The protein operates within amino-acid biosynthesis; L-histidine biosynthesis; L-histidine from 5-phospho-alpha-D-ribose 1-diphosphate: step 6/9. The chain is Imidazoleglycerol-phosphate dehydratase from Clostridium botulinum (strain 657 / Type Ba4).